The sequence spans 181 residues: Bradykinin-potentiating and C-type natriuretic peptides (181 aa).

Residues 1–23 (MFVSRLAASGLLLLALLAVSLDG) form the signal peptide. A propeptide spanning residues 24-30 (KPLQQWS) is cleaved from the precursor. The residue at position 31 (Q31) is a Pyrrolidone carboxylic acid. The propeptide occupies 41 to 43 (LVV). A Pyrrolidone carboxylic acid modification is found at Q44. Propeptides lie at residues 50 to 78 (TQLQARESPAGGTTALREELSLGPEAALD) and 90 to 157 (GSKA…KGLA). Residues 74–153 (EAALDTPPAG…GGGGGGARRL (80 aa)) form a disordered region. Positions 104 to 114 (SKGASATSAAS) are enriched in low complexity. Residues 140–150 (AGGGGGGGGGA) show a composition bias toward gly residues. The cysteines at positions 165 and 181 are disulfide-linked.

The protein in the N-terminal section; belongs to the bradykinin-potentiating peptide family. In the C-terminal section; belongs to the natriuretic peptide family. In terms of tissue distribution, venom gland.

The protein localises to the secreted. Its function is as follows. Bradykinin-potentiating peptide both inhibits the activity of the angiotensin-converting enzyme (ACE) and enhances the action of bradykinin by inhibiting the peptidases that inactivate it. It acts as an indirect hypotensive agent. In terms of biological role, antagonizes the vasodilatory actions of bradykinin at the B2 bradykinin receptor. Has no demonstrable hypotensive activity when injected intravenously in rats. Has a vasorelaxant activity in rat aortic strips and a diuretic potency in anesthetized rats. May act by activating natriuretic receptors (NPR1 and/or NPR2). This Crotalus durissus collilineatus (Brazilian rattlesnake) protein is Bradykinin-potentiating and C-type natriuretic peptides.